Consider the following 379-residue polypeptide: Type II methyltransferase M.SsoII (379 aa).

Residues 9-66 (IKEKRERLHMTQKEFADALGLSKYGDRTIRRWERGETKPTGAELKAVIDFPDTPPYPN) form the HTH cro/C1-type domain. An SAM-dependent MTase C5-type domain is found at 72 to 379 (YRMIDLFAGI…AEKIISTLDS (308 aa)). The active site involves Cys-142.

Belongs to the class I-like SAM-binding methyltransferase superfamily. C5-methyltransferase family.

The enzyme catalyses a 2'-deoxycytidine in DNA + S-adenosyl-L-methionine = a 5-methyl-2'-deoxycytidine in DNA + S-adenosyl-L-homocysteine + H(+). Functionally, a methylase that recognizes the double-stranded sequence 5'-CCNGG-3', methylates C-2 on both strands, and protects the DNA from cleavage by the SsoII endonuclease. The protein is Type II methyltransferase M.SsoII (ssoIIM) of Shigella sonnei.